The chain runs to 237 residues: Ribose-5-phosphate isomerase A (237 aa).

Substrate is bound by residues 33 to 36 (TGST), 90 to 93 (DGAD), and 103 to 106 (KGGG). The active-site Proton acceptor is the glutamate 112. Lysine 130 provides a ligand contact to substrate.

This sequence belongs to the ribose 5-phosphate isomerase family. Homodimer.

It carries out the reaction aldehydo-D-ribose 5-phosphate = D-ribulose 5-phosphate. It participates in carbohydrate degradation; pentose phosphate pathway; D-ribose 5-phosphate from D-ribulose 5-phosphate (non-oxidative stage): step 1/1. Catalyzes the reversible conversion of ribose-5-phosphate to ribulose 5-phosphate. This chain is Ribose-5-phosphate isomerase A, found in Trichodesmium erythraeum (strain IMS101).